A 197-amino-acid chain; its full sequence is uncharacterized protein (197 aa).

Transmembrane regions (helical) follow at residues L5–F23, I27–F46, V55–T77, L87–I109, V116–G138, and F153–F174.

The protein localises to the cell membrane. This is an uncharacterized protein from Archaeoglobus fulgidus (strain ATCC 49558 / DSM 4304 / JCM 9628 / NBRC 100126 / VC-16).